Consider the following 421-residue polypeptide: Subtilisin-like protease 2 (421 aa).

A signal peptide spans 1-16 (MQLLNFGLLLLPFVAG). A propeptide spanning residues 17–122 (DLAPQPEPLL…VHPDQHVYLA (106 aa)) is cleaved from the precursor. Positions 36-122 (QYIVTLKEGL…VHPDQHVYLA (87 aa)) constitute an Inhibitor I9 domain. Positions 131–421 (RWGLGYMSSK…ERKFTLPKYF (291 aa)) constitute a Peptidase S8 domain. Residues Asp169 and His201 each act as charge relay system in the active site. Asn248, Asn261, and Asn348 each carry an N-linked (GlcNAc...) asparagine glycan. Ser357 acts as the Charge relay system in catalysis. N-linked (GlcNAc...) asparagine glycosylation occurs at Asn388.

This sequence belongs to the peptidase S8 family.

It localises to the secreted. Its function is as follows. Secreted subtilisin-like serine protease with keratinolytic activity that contributes to pathogenicity. The chain is Subtilisin-like protease 2 (SUB2) from Trichophyton equinum (Horse ringworm fungus).